Here is an 818-residue protein sequence, read N- to C-terminus: FAD-dependent monooxygenase anuJ (818 aa).

Glu-46, Ala-60, Arg-122, Asp-329, and Gly-342 together coordinate FAD. 3 helical membrane-spanning segments follow: residues 471 to 491, 539 to 559, and 571 to 591; these read VLWALPLLGMAVAGLLTMFSV, FFYQPFSFFADYGVWYGIMLV, and LSFALLWGMLNMWGIAIFVPI. N-linked (GlcNAc...) asparagine glycosylation is present at Asn-614. The next 2 helical transmembrane spans lie at 621 to 641 and 647 to 667; these read ILPVLLATHYATFMDAYLSPV and AAGFLWELFPVWLSLAQAGLA. Asn-683 is a glycosylation site (N-linked (GlcNAc...) asparagine). The next 2 helical transmembrane spans lie at 743-763 and 778-798; these read WDQVFFAIPNLFWIILLFADL and FSALGLIIAGGNGTMLGLMWL.

It belongs to the paxM FAD-dependent monooxygenase family.

The protein localises to the membrane. Functionally, highly reducing polyketide synthase; part of the gene cluster that mediates the biosynthesis of annullatin D, an alkylated aromatic polyketide with a fused dihydrobenzofuran lactone ring system that exhibits potent agonistic activities toward the cannabinoid receptors. AnuJ does not seem to play a role within the pathway. The annullatin backbone 2-hydroxymethyl-3-pentylphenol is assembled from one acetyl-CoA starter unit and 5 malonyl-CoA elongation units by cooperation of the highly reducing polyketide synthase anuA, the short-chain dehydrogenase anuB and the oxidoreductase anuC, before being hydroxylated at the C-5 alkyl chain by the cytochrome P450 monooxygenase anuE to form (8S)-annullatin E. The prenyltransferase anuH subsequently installs one isoprenyl group at the benzene ring to form (8S)-annullatin J. Enzymatic or nonenzymatic dihydro-benzofuran ring formation between the prenyl and the phenolic hydroxyl groups in (8S)-annullatin J results in two diastereomers (2S,9S)-annullatin H and compound 12. The intermediate (2S,9S)-annullatin H is then converted to (2S,9S)-annullatin D by the FAD-linked oxidoreductase anuG-catalyzed five-member lactone ring formation. The isomer 12 acts as a substrate for the short-chain dehydrogenase anuF and is oxidized to (2R)-annullatin F, which is subsequently acetylated by an acetyltransferase leading to (2R)-annullatin G formation. The remaining enzymes identified within the cluster, anuD, anuI and anuJ, seem not to be involved in annullatin biosynthesis. The sequence is that of FAD-dependent monooxygenase anuJ from Penicillium roqueforti (strain FM164).